The following is a 303-amino-acid chain: MLWFKNLLIYRLNREIPLVAQEMESQLSAMAFTPCGSQDMSRTGWVPPLGGGSDALTHCANGQILLCARKEEKILPAPVLKQALQAKIERLEGEQHRKLKKTEKDALKDEVLHSLLPRAFSRFNQTWLWIDSVNNLIMLDAASAKRAEDVLALLRKSLGSLPVVPLTLDKPIEMTLTEWVRSGNTPAGFCLQDEAELKAILEEGGVIRCKQQALVCDEIAVHIEAGKLVTKLALDWHERIQLVLADDGAIKRLKFSETLRDQNEDIDREDAALRFDADFALMTGELAVLIDELITALGGETAQ.

The protein belongs to the RdgC family.

It localises to the cytoplasm. It is found in the nucleoid. May be involved in recombination. This Edwardsiella ictaluri (strain 93-146) protein is Recombination-associated protein RdgC.